A 226-amino-acid chain; its full sequence is ATP-dependent dethiobiotin synthetase BioD (226 aa).

Mg(2+) is bound at residue T19. K40 is an active-site residue. Mg(2+) contacts are provided by D53 and E114. Residues D53, 114 to 117 (EGAG), and 174 to 175 (NR) each bind ATP.

Belongs to the dethiobiotin synthetase family. As to quaternary structure, homodimer. Requires Mg(2+) as cofactor.

Its subcellular location is the cytoplasm. It catalyses the reaction (7R,8S)-7,8-diammoniononanoate + CO2 + ATP = (4R,5S)-dethiobiotin + ADP + phosphate + 3 H(+). It functions in the pathway cofactor biosynthesis; biotin biosynthesis; biotin from 7,8-diaminononanoate: step 1/2. Catalyzes a mechanistically unusual reaction, the ATP-dependent insertion of CO2 between the N7 and N8 nitrogen atoms of 7,8-diaminopelargonic acid (DAPA, also called 7,8-diammoniononanoate) to form a ureido ring. The protein is ATP-dependent dethiobiotin synthetase BioD of Nitrosospira multiformis (strain ATCC 25196 / NCIMB 11849 / C 71).